The primary structure comprises 253 residues: Phosphate import ATP-binding protein PstB 1 (253 aa).

The ABC transporter domain maps to 7 to 248; sequence LTVSDLSLYY…PEKQETSDYI (242 aa). Residue 39–46 coordinates ATP; the sequence is GPSGCGKS.

It belongs to the ABC transporter superfamily. Phosphate importer (TC 3.A.1.7) family. The complex is composed of two ATP-binding proteins (PstB), two transmembrane proteins (PstC and PstA) and a solute-binding protein (PstS).

Its subcellular location is the cell membrane. It catalyses the reaction phosphate(out) + ATP + H2O = ADP + 2 phosphate(in) + H(+). In terms of biological role, part of the ABC transporter complex PstSACB involved in phosphate import. Responsible for energy coupling to the transport system. In Lactococcus lactis subsp. lactis (strain IL1403) (Streptococcus lactis), this protein is Phosphate import ATP-binding protein PstB 1.